The primary structure comprises 31 residues: Hemocyanin subunit 2 (31 aa).

Belongs to the tyrosinase family. Hemocyanin subfamily. In terms of tissue distribution, hemolymph.

The protein resides in the secreted. The protein localises to the extracellular space. Its function is as follows. Hemocyanins are copper-containing oxygen carriers occurring freely dissolved in the hemolymph of many mollusks and arthropods. The sequence is that of Hemocyanin subunit 2 from Maja squinado (Mediterranean spider crab).